A 311-amino-acid polypeptide reads, in one-letter code: Pyrimidine-specific ribonucleoside hydrolase RihA (311 aa).

The active site involves H240.

It belongs to the IUNH family. RihA subfamily.

Its function is as follows. Hydrolyzes cytidine or uridine to ribose and cytosine or uracil, respectively. The chain is Pyrimidine-specific ribonucleoside hydrolase RihA from Salmonella arizonae (strain ATCC BAA-731 / CDC346-86 / RSK2980).